The chain runs to 73 residues: Stigmurin (73 aa).

The N-terminal stretch at methionine 1–alanine 22 is a signal peptide. A Lysine amide modification is found at lysine 39. Residues glutamate 45–tyrosine 73 constitute a propeptide that is removed on maturation.

It belongs to the non-disulfide-bridged peptide (NDBP) superfamily. Short antimicrobial peptide (group 4) family. Expressed by the venom gland.

The protein localises to the secreted. In terms of biological role, antimicrobial peptide with activity against Gram-positive bacterial strains (S.aureus (MIC=2-140 uM), methicillin-resistant S.aureus (MRSA) (MIC=8-17 uM), S.epidermidis (MIC=1.17 uM), and the yeasts C.albicans, C.krusei, and C.glabrata (MIC=34-69 uM)). Acts by disrupting the cell membrane (observed on outer layer of the S.aureus). Is not active against Gram-negative bacteria (E.coli, E.Cloacae, P.aeruginosa), and the Gram-positive bacterium E.faecalis. Also shows toxicity against several cell lines, but possess low hemolytic activity at the highest concentration tested. Also shows antiparasitic activity against Trypanosoma cruzi by decreasing the viability of the epimastigote and trypomastigote forms of the parasite. Displays high hydroxyl radical scavenging activity (antioxidant action). In a wound infection model, the topical application of this peptide demonstrates antibacterial effects, as well as an ability to accelerate wound closure speed, which suggests the induction of tissue repair. In the model of polymicrobial sepsis, it exhibits an antibiotic effect, reducing the levels of microorganisms in the infectious focus and the inflammatory responses in the lung and cecum of septic animals. The protein is Stigmurin of Tityus stigmurus (Brazilian scorpion).